The sequence spans 375 residues: All-trans-retinol dehydrogenase [NAD(+)] ADH1B (375 aa).

Serine 2 carries the N-acetylserine modification. Position 23 is a phosphoserine (serine 23). Tyrosine 35 is modified (phosphotyrosine). Zn(2+) is bound by residues cysteine 47, histidine 68, cysteine 98, cysteine 101, cysteine 104, cysteine 112, and cysteine 175. NAD(+) is bound by residues 200–205 (GLGGVG), aspartate 224, lysine 229, 293–295 (VGV), and arginine 370.

It belongs to the zinc-containing alcohol dehydrogenase family. As to quaternary structure, homodimer or heterodimer of closely related subunits. It depends on Zn(2+) as a cofactor. As to expression, expressed in liver.

It is found in the cytoplasm. The enzyme catalyses all-trans-retinol + NAD(+) = all-trans-retinal + NADH + H(+). The catalysed reaction is all-trans-4-hydroxyretinol + NAD(+) = all-trans-4-hydroxyretinal + NADH + H(+). It catalyses the reaction all-trans-4-oxoretinol + NAD(+) = all-trans-4-oxoretinal + NADH + H(+). Its function is as follows. Catalyzes the NAD-dependent oxidation of all-trans-retinol and its derivatives such as all-trans-4-hydroxyretinol and may participate in retinoid metabolism. In vitro can also catalyze the NADH-dependent reduction of all-trans-retinal and its derivatives such as all-trans-4-oxoretinal. Catalyzes in the oxidative direction with higher efficiency. Has the same affinity for all-trans-4-hydroxyretinol and all-trans-4-oxoretinal. The protein is All-trans-retinol dehydrogenase [NAD(+)] ADH1B of Papio hamadryas (Hamadryas baboon).